Reading from the N-terminus, the 279-residue chain is Digeranylgeranylglyceryl phosphate synthase (279 aa).

A run of 8 helical transmembrane segments spans residues 14-34 (VKNC…ASNF), 36-56 (FGLI…CGFG), 94-114 (LMIS…IALI), 131-153 (IIGN…ASVG), 157-175 (ITLI…REII), 201-221 (IFVA…PYIL), 224-244 (FGAP…LAVL), and 259-279 (SKYI…GSLM).

Belongs to the UbiA prenyltransferase family. DGGGP synthase subfamily. Mg(2+) is required as a cofactor.

It is found in the cell membrane. The enzyme catalyses sn-3-O-(geranylgeranyl)glycerol 1-phosphate + (2E,6E,10E)-geranylgeranyl diphosphate = 2,3-bis-O-(geranylgeranyl)-sn-glycerol 1-phosphate + diphosphate. Its pathway is membrane lipid metabolism; glycerophospholipid metabolism. In terms of biological role, prenyltransferase that catalyzes the transfer of the geranylgeranyl moiety of geranylgeranyl diphosphate (GGPP) to the C2 hydroxyl of (S)-3-O-geranylgeranylglyceryl phosphate (GGGP). This reaction is the second ether-bond-formation step in the biosynthesis of archaeal membrane lipids. This Methanococcus aeolicus (strain ATCC BAA-1280 / DSM 17508 / OCM 812 / Nankai-3) protein is Digeranylgeranylglyceryl phosphate synthase.